Here is a 118-residue protein sequence, read N- to C-terminus: Holo-[acyl-carrier-protein] synthase (118 aa).

Aspartate 8 and glutamate 58 together coordinate Mg(2+).

The protein belongs to the P-Pant transferase superfamily. AcpS family. Mg(2+) serves as cofactor.

It is found in the cytoplasm. It catalyses the reaction apo-[ACP] + CoA = holo-[ACP] + adenosine 3',5'-bisphosphate + H(+). Transfers the 4'-phosphopantetheine moiety from coenzyme A to a Ser of acyl-carrier-protein. This chain is Holo-[acyl-carrier-protein] synthase, found in Streptococcus pyogenes serotype M28 (strain MGAS6180).